A 318-amino-acid polypeptide reads, in one-letter code: Esterase FVEG_12639 (318 aa).

Residues serine 156, aspartate 255, and histidine 285 contribute to the active site.

It belongs to the AB hydrolase 3 family.

Its function is as follows. Esterase; part of the Fusarium detoxification of benzoxazolinone cluster 2 (FDB2) involved in the degradation of benzoxazolinones produced by the host plant. Maize, wheat, and rye produce the 2 benzoxazinone phytoanticipins 2,4-dihy-droxy-7-methoxy-1,4-benzoxazin-3-one (DIMBOA) and 2,4-dihydroxy-1,4-benzoxazin-3-one (DIBOA) that, due to their inherent instability once released, spontaneously degrade to the more stable corresponding benzoxazolinones, 6-methoxy-2-benzoxazolinone (MBOA) and 2-benzoxazolinone (BOA), respectively. The first step in the detoxification of benzoxazolinones involves the hydrolysis of the cyclic ester bond of benzoxazolinones by the FDB1 cluster gamma-lactamase MBL1 to aminophenols. MBL1 is able to convert BOA into 2-aminophenol (2-AP), as well as MBOA into 5-methoxy-2-aminophenol (2-AMP). The FDB2 cluster N-malonyltransferase FDB2/NAT1 then metabolizes aminophenols via N-malonylation to non-toxic malonamic acids. FDB2/NAT1 converts 2-AP into N-(2-hydroxyphenyl) malonamic acid (HPMA) and 2-AMP into N-(2-hydroxy-4-methoxyphenyl) malonamic acid (HMPMA). The duplicated dienlactone hydrolases DLH1 and DLH2 may provide redundant function for hydrolyzing the lactone moiety in the BOA molecule. The roles of the amidases an other enzymes encoded by the 2 FDB clusters have not been identified so far. In Gibberella moniliformis (strain M3125 / FGSC 7600) (Maize ear and stalk rot fungus), this protein is Esterase FVEG_12639.